The chain runs to 264 residues: MKNYSSLIIGGKKFSSRLMVGTGKYKSSQDMVESLSNSETEIITVAVRRIKNEQSGENLLEKINWEKYWMLPNTAGCVNSDEAVRIAILGRELAKLSGQEENNFVKLEVIPDKKYLLPDPIETLKAAEILIKKGFAVLPYINADPILAKRLEEIGCATVMPLGSPIGSGQGLLNLSNIRIIIENAKVPVIIDAGIGVPSEASQAMEIGADGVLINSAIAQAANPPLMAQAINYSVKAGRQAFLAGRIKKQDFAVASSPEKNISI.

K106 functions as the Schiff-base intermediate with DXP in the catalytic mechanism. Residues G167, A193–G194, and N215–S216 contribute to the 1-deoxy-D-xylulose 5-phosphate site.

This sequence belongs to the ThiG family. As to quaternary structure, homotetramer. Forms heterodimers with either ThiH or ThiS.

It localises to the cytoplasm. It carries out the reaction [ThiS sulfur-carrier protein]-C-terminal-Gly-aminoethanethioate + 2-iminoacetate + 1-deoxy-D-xylulose 5-phosphate = [ThiS sulfur-carrier protein]-C-terminal Gly-Gly + 2-[(2R,5Z)-2-carboxy-4-methylthiazol-5(2H)-ylidene]ethyl phosphate + 2 H2O + H(+). It participates in cofactor biosynthesis; thiamine diphosphate biosynthesis. In terms of biological role, catalyzes the rearrangement of 1-deoxy-D-xylulose 5-phosphate (DXP) to produce the thiazole phosphate moiety of thiamine. Sulfur is provided by the thiocarboxylate moiety of the carrier protein ThiS. In vitro, sulfur can be provided by H(2)S. The chain is Thiazole synthase from Prochlorococcus marinus (strain MIT 9301).